Here is a 142-residue protein sequence, read N- to C-terminus: Large ribosomal subunit protein uL13 (142 aa).

It belongs to the universal ribosomal protein uL13 family. Part of the 50S ribosomal subunit.

Its function is as follows. This protein is one of the early assembly proteins of the 50S ribosomal subunit, although it is not seen to bind rRNA by itself. It is important during the early stages of 50S assembly. This Cupriavidus metallidurans (strain ATCC 43123 / DSM 2839 / NBRC 102507 / CH34) (Ralstonia metallidurans) protein is Large ribosomal subunit protein uL13.